A 381-amino-acid chain; its full sequence is Early boundary activity protein 2 (381 aa).

Positions 210-245 are disordered; that stretch reads NDAEDVPAPPSKRPRHMSTSSSESHIPDTASEKDEK. One can recognise a BEN domain in the interval 268 to 365; that stretch reads PNGTQITAHQ…TKCADTAKKY (98 aa).

In terms of assembly, the heterotrimeric Elba complex consists of Elba1, Elba2 and Elba3.

The protein resides in the nucleus. In terms of biological role, the heterotrimeric Elba complex is required for chromatin domain boundary function during early embryogenesis. It binds to a 8-bp sequence 5'-CCAATAAG-3' in the Fab-7 insulator or boundary element in the bithorax complex and contributes to its insulator or boundary activity. Elba2 can act as a transcriptional repressor and binds the palindromic sequence 5'-CCAATTGG-3' to mediate transcriptional repression. This is Early boundary activity protein 2 from Drosophila melanogaster (Fruit fly).